The following is a 270-amino-acid chain: Phosphatidate cytidylyltransferase (270 aa).

7 consecutive transmembrane segments (helical) span residues 19 to 39 (LWLT…IGLA), 53 to 73 (TAFS…LLIL), 76 to 96 (GALL…VTQW), 101 to 121 (GWPA…SLLR), 126 to 146 (FGFT…ITAY), 183 to 203 (LVAS…ALLL), and 248 to 268 (ALLY…AIFF).

The protein belongs to the CDS family.

It is found in the cell inner membrane. It carries out the reaction a 1,2-diacyl-sn-glycero-3-phosphate + CTP + H(+) = a CDP-1,2-diacyl-sn-glycerol + diphosphate. The protein operates within phospholipid metabolism; CDP-diacylglycerol biosynthesis; CDP-diacylglycerol from sn-glycerol 3-phosphate: step 3/3. The sequence is that of Phosphatidate cytidylyltransferase (cdsA) from Brucella abortus (strain 2308).